The primary structure comprises 387 residues: 1-hydroxy-2-naphthoate 1,2-dioxygenasee (387 aa).

2 Cupin type-2 domains span residues 103–171 and 271–337; these read FQLV…VWLD and VQRL…VLLF.

In terms of assembly, homohexamer. The cofactor is Fe(2+).

It carries out the reaction 1-hydroxy-2-naphthoate + O2 = (3Z)-4-(2-carboxyphenyl)-2-oxobut-3-enoate + H(+). Dioxygenase involved in phenanthrene catabolism by mediating cleavage of 1-hydroxy-2-naphthoate. This is 1-hydroxy-2-naphthoate 1,2-dioxygenasee (phdI) from Nocardioides sp. (strain KP7).